We begin with the raw amino-acid sequence, 190 residues long: Xanthine phosphoribosyltransferase (190 aa).

The xanthine site is built by Leu-20 and Asn-27. 128–132 provides a ligand contact to 5-phospho-alpha-D-ribose 1-diphosphate; that stretch reads ANGHA. Position 156 (Lys-156) interacts with xanthine.

It belongs to the purine/pyrimidine phosphoribosyltransferase family. Xpt subfamily. In terms of assembly, homodimer.

The protein resides in the cytoplasm. It catalyses the reaction XMP + diphosphate = xanthine + 5-phospho-alpha-D-ribose 1-diphosphate. The protein operates within purine metabolism; XMP biosynthesis via salvage pathway; XMP from xanthine: step 1/1. Functionally, converts the preformed base xanthine, a product of nucleic acid breakdown, to xanthosine 5'-monophosphate (XMP), so it can be reused for RNA or DNA synthesis. The protein is Xanthine phosphoribosyltransferase of Ectopseudomonas mendocina (strain ymp) (Pseudomonas mendocina).